The chain runs to 192 residues: UPF0149 protein Spro_3920 (192 aa).

The protein belongs to the UPF0149 family.

The sequence is that of UPF0149 protein Spro_3920 from Serratia proteamaculans (strain 568).